Here is a 567-residue protein sequence, read N- to C-terminus: Geranylgeranyl transferase type-2 subunit alpha (567 aa).

PFTA repeat units lie at residues 44–78 (LDES…QLET), 88–122 (LVKA…RLPE), 124–158 (NWTR…QAAV), 159–193 (PPAE…QLHP), 207–241 (VLLK…RADP), and 363–397 (VLQS…ALDP). A Phosphoserine modification is found at Ser98. LRR repeat units follow at residues 442-463 (EVRV…EQLL), 464-486 (LVTH…AALR), 487-508 (CLEV…TNLP), 509-530 (RLQE…QPLA), and 534-555 (RLVL…LEQL).

The protein belongs to the protein prenyltransferase subunit alpha family. Heterotrimer composed of RABGGTA, RABGGTB and CHM; within this trimer, RABGGTA and RABGGTB form the catalytic component B, while CHM (component A) mediates peptide substrate binding. The Rab GGTase dimer (RGGT) interacts with CHM (component A) prior to Rab protein binding; the association is stabilized by geranylgeranyl pyrophosphate (GGpp). The CHM:RGGT:Rab complex is destabilized by GGpp. Interacts with non-phosphorylated form of RAB8A; phosphorylation of RAB8A at 'Thr-72' disrupts this interaction.

It catalyses the reaction geranylgeranyl diphosphate + L-cysteinyl-[protein] = S-geranylgeranyl-L-cysteinyl-[protein] + diphosphate. The enzymatic reaction requires the aid of a Rab escort protein (also called component A), such as CHM. Its function is as follows. Catalyzes the transfer of a geranylgeranyl moiety from geranylgeranyl diphosphate to both cysteines of Rab proteins with the C-terminal sequence -XXCC, -XCXC and -CCXX, such as RAB1A, RAB3A, RAB5A and RAB7A. The polypeptide is Geranylgeranyl transferase type-2 subunit alpha (RABGGTA) (Pongo abelii (Sumatran orangutan)).